Consider the following 213-residue polypeptide: Octanoyltransferase (213 aa).

The BPL/LPL catalytic domain occupies 32 to 207 (ENTPDEIWLV…NILALLNNPP (176 aa)). Substrate is bound by residues 71–78 (RGGQVTYH), 138–140 (SLG), and 151–153 (GLA). C169 serves as the catalytic Acyl-thioester intermediate.

It belongs to the LipB family.

The protein resides in the cytoplasm. The catalysed reaction is octanoyl-[ACP] + L-lysyl-[protein] = N(6)-octanoyl-L-lysyl-[protein] + holo-[ACP] + H(+). Its pathway is protein modification; protein lipoylation via endogenous pathway; protein N(6)-(lipoyl)lysine from octanoyl-[acyl-carrier-protein]: step 1/2. In terms of biological role, catalyzes the transfer of endogenously produced octanoic acid from octanoyl-acyl-carrier-protein onto the lipoyl domains of lipoate-dependent enzymes. Lipoyl-ACP can also act as a substrate although octanoyl-ACP is likely to be the physiological substrate. The sequence is that of Octanoyltransferase from Citrobacter koseri (strain ATCC BAA-895 / CDC 4225-83 / SGSC4696).